The primary structure comprises 593 residues: Dolichyl-phosphooligosaccharide-protein glycotransferase 2 (593 aa).

Topologically, residues Met1 to Ser12 are cytoplasmic. A helical membrane pass occupies residues Leu13 to Phe33. Topologically, residues Asp34 to Glu98 are extracellular. The DXD motif 1 motif lies at Gly41–Asp43. Asp43 is a binding site for Mn(2+). Residues Ile99 to Ile119 form a helical membrane-spanning segment. The Cytoplasmic segment spans residues Ser120–Lys128. The helical transmembrane segment at Phe129–Leu149 threads the bilayer. At Gly150–His154 the chain is on the extracellular side. Residue Asp153 participates in Mn(2+) binding. The short motif at Asp153–His155 is the DXD motif 2 element. An a glycophospholipid-binding site is contributed by His154. A Mn(2+)-binding site is contributed by His155. A helical membrane pass occupies residues His155–Leu175. Residues Lys176–Gly180 are Cytoplasmic-facing. The chain crosses the membrane as a helical span at residues Ile181–Ala201. The Extracellular portion of the chain corresponds to Val202–Gln229. Residues Asn230–Val250 form a helical membrane-spanning segment. At Lys251–Leu265 the chain is on the cytoplasmic side. A helical membrane pass occupies residues Cys266–Val286. The Extracellular segment spans residues Lys287–Gln310. Residues Thr302–Glu305 carry the TIXE motif motif. The helical transmembrane segment at Ile311–Phe331 threads the bilayer. A topological domain (cytoplasmic) is located at residue Met332. A helical transmembrane segment spans residues Leu333 to Leu353. Residue Arg354 is a topological domain, extracellular. Position 354 (Arg354) interacts with a glycophospholipid. A helical transmembrane segment spans residues Phe355–Leu375. The Cytoplasmic portion of the chain corresponds to Glu376–Ala411. A helical membrane pass occupies residues Thr412–Val432. Topologically, residues Glu433–Lys593 are extracellular. Residues Trp468–Asp470 form an interacts with target acceptor peptide in protein substrate region. The WWDYG motif motif lies at Trp468 to Gly472. A DKi motif motif is present at residues Glu524 to Ile539.

This sequence belongs to the STT3 family. Requires Mn(2+) as cofactor. Mg(2+) serves as cofactor. Zn(2+) is required as a cofactor.

The protein localises to the cell membrane. The enzyme catalyses an archaeal dolichyl phosphooligosaccharide + [protein]-L-asparagine = an archaeal dolichyl phosphate + a glycoprotein with the oligosaccharide chain attached by N-beta-D-glycosyl linkage to a protein L-asparagine.. It participates in protein modification; protein glycosylation. Oligosaccharyl transferase (OST) that catalyzes the initial transfer of a defined glycan (a GalNAc-linked heptasaccharide composed of 4 Hex, 3 dHex and a sulfate for A.fulgidus AglB-S) from the lipid carrier dolichol-monophosphate to an asparagine residue within an Asn-X-Ser/Thr consensus motif in nascent polypeptide chains, the first step in protein N-glycosylation. The sequence is that of Dolichyl-phosphooligosaccharide-protein glycotransferase 2 (aglB2) from Archaeoglobus fulgidus (strain ATCC 49558 / DSM 4304 / JCM 9628 / NBRC 100126 / VC-16).